Consider the following 1306-residue polypeptide: Synergin gamma (1306 aa).

Residues 113–153 are a coiled coil; that stretch reads MQKQFAEEQQKRFEQQQKLLEEERKRRQFEEQKQKLRLLSS. Disordered regions lie at residues 176–196 and 252–285; these read GFSR…KQGP and SGPA…PAQS. Positions 258 to 272 are enriched in basic and acidic residues; the sequence is EAEKTSDQTLSKEES. The EH domain maps to 293-404; it reads NESLVPDAYK…TPVSQPTAMP (112 aa). Residues 455–459 carry the DFXDF motif 1 motif; the sequence is DFQDF. The interval 460 to 494 is disordered; sequence QDASKSGSIDDSFTDFQEMPASSKTSNSQHGNSAP. S471 bears the Phosphoserine mark. K509 carries the post-translational modification N6-acetyllysine. The tract at residues 514–778 is interaction with AP1G1; that stretch reads KGISTDKPSE…ADFHSSKFSS (265 aa). Positions 559–601 are disordered; it reads STGTDDGFTDFKTADSVSPLEPPTKDTFPSAFASGAAQQTQTQ. S576 carries the post-translational modification Phosphoserine. Residues 661 to 673 form an interaction with AP1G1, AP1G2 and GGA1 region; that stretch reads LADDFGEFNLFGE. The DFXDF motif 2 motif lies at 685-689; the sequence is DFADF. The disordered stretch occupies residues 697–730; the sequence is ISSEPKASDKYEALREEVSPSPLSSSTVEGAQHP. Basic and acidic residues predominate over residues 702 to 714; that stretch reads KASDKYEALREEV. S715 carries the post-translational modification Phosphoserine. An N6-acetyllysine modification is found at K736. 2 positions are modified to phosphoserine: S744 and S764. The DFXDF motif 3 motif lies at 767 to 771; the sequence is DFADF. Phosphoserine is present on residues S804, S844, S847, S901, S911, S927, S974, S998, S1065, S1067, S1079, and S1090. 2 disordered regions span residues 986 to 1016 and 1065 to 1090; these read PTVD…ADDF and SLSL…RDRS. A compositionally biased stretch (polar residues) spans 993-1005; that stretch reads ETSCPSPASSVAS. At T1092 the chain carries Phosphothreonine.

As to quaternary structure, self-associates. Interacts with GGA1 (via GAE domain). Interacts with GGA2 and GGA3. Interacts with AP1G1 (via GAE domain), a subunit of adapter protein complex AP-1. Interacts with AP1G2 (via GAE domain) a subunit of adapter protein complex AP-1. Component of the aftiphilin/p200/gamma-synergin complex, at least composed of AFTPH/aftiphilin, HEATR5B/p200a and SYNRG/gamma-synergin, which plays a role in the AP1G1/AP-1-mediated trafficking of transferrin from early to recycling endosomes. Within the complex interacts with AFTPH/aftiphilin and HEATR5B/p200a; the interactions are direct. Interacts (via EH domain) with SCAMP1.

It localises to the cytoplasm. The protein resides in the cytosol. It is found in the golgi apparatus. Its subcellular location is the trans-Golgi network membrane. The protein localises to the perinuclear region. It localises to the cytoplasmic vesicle. The protein resides in the clathrin-coated vesicle. Its function is as follows. Plays a role in endocytosis and/or membrane trafficking at the trans-Golgi network (TGN). May act by linking the adapter protein complex AP-1 to other proteins. Component of clathrin-coated vesicles. Component of the aftiphilin/p200/gamma-synergin complex, which plays roles in AP1G1/AP-1-mediated protein trafficking including the trafficking of transferrin from early to recycling endosomes, and the membrane trafficking of furin and the lysosomal enzyme cathepsin D between the trans-Golgi network (TGN) and endosomes. This Mus musculus (Mouse) protein is Synergin gamma (Synrg).